Consider the following 440-residue polypeptide: Thymidine phosphorylase (440 aa).

The protein belongs to the thymidine/pyrimidine-nucleoside phosphorylase family. As to quaternary structure, homodimer.

It carries out the reaction thymidine + phosphate = 2-deoxy-alpha-D-ribose 1-phosphate + thymine. It participates in pyrimidine metabolism; dTMP biosynthesis via salvage pathway; dTMP from thymine: step 1/2. Functionally, the enzymes which catalyze the reversible phosphorolysis of pyrimidine nucleosides are involved in the degradation of these compounds and in their utilization as carbon and energy sources, or in the rescue of pyrimidine bases for nucleotide synthesis. This chain is Thymidine phosphorylase, found in Shigella dysenteriae serotype 1 (strain Sd197).